A 294-amino-acid chain; its full sequence is Tryptophan 2,3-dioxygenase (294 aa).

Substrate is bound by residues 63–67 (FIIQH), Tyr-125, and Arg-129. Residue His-252 participates in heme binding. Residue Thr-266 participates in substrate binding.

The protein belongs to the tryptophan 2,3-dioxygenase family. In terms of assembly, homotetramer. The cofactor is heme.

The catalysed reaction is L-tryptophan + O2 = N-formyl-L-kynurenine. It participates in amino-acid degradation; L-tryptophan degradation via kynurenine pathway; L-kynurenine from L-tryptophan: step 1/2. Heme-dependent dioxygenase that catalyzes the oxidative cleavage of the L-tryptophan (L-Trp) pyrrole ring and converts L-tryptophan to N-formyl-L-kynurenine. Catalyzes the oxidative cleavage of the indole moiety. This chain is Tryptophan 2,3-dioxygenase, found in Polaromonas sp. (strain JS666 / ATCC BAA-500).